Consider the following 67-residue polypeptide: MGGLVVLLVGLLTALMSVVSYYVSPKGNNTSTWQMSLILTFSCCYLLWAITYLAQLHPLEAPSRVLE.

The Lumenal segment spans residues 1–2 (MG). The chain crosses the membrane as a helical span at residues 3–23 (GLVVLLVGLLTALMSVVSYYV). Topologically, residues 24-35 (SPKGNNTSTWQM) are cytoplasmic. A helical transmembrane segment spans residues 36–56 (SLILTFSCCYLLWAITYLAQL). The Lumenal portion of the chain corresponds to 57–67 (HPLEAPSRVLE).

The protein belongs to the V-ATPase e1/e2 subunit family. In terms of assembly, V-ATPase is a heteromultimeric enzyme composed of a peripheral catalytic V1 complex (components A to H) attached to an integral membrane V0 proton pore complex (components: a, c, c', c'', d, e, f and VOA1).

Its subcellular location is the vacuole membrane. Functionally, subunit of the V0 complex of vacuolar(H+)-ATPase (V-ATPase), a multisubunit enzyme composed of a peripheral complex (V1) that hydrolyzes ATP and a membrane integral complex (V0) that translocates protons. V-ATPase is responsible for acidifying and maintaining the pH of intracellular compartments. The sequence is that of V-type proton ATPase subunit e (vma9) from Schizosaccharomyces pombe (strain 972 / ATCC 24843) (Fission yeast).